We begin with the raw amino-acid sequence, 2515 residues long: Nonribosomal peptide synthetase tpzA (2515 aa).

Positions 246 to 648 are adenylation 1; the sequence is ELATRQPGAQ…GRMGTQVKLR (403 aa). In terms of domain architecture, Carrier 1 spans 794–867; sequence SEVEHLIHAI…DMATVALKTS (74 aa). Position 828 is an O-(pantetheine 4'-phosphoryl)serine (S828). Positions 924 to 1332 are condensation 1; the sequence is DAYPCSPLQE…IRSVPHITPE (409 aa). Residues 1357–1758 are adenylation 2; it reads RKQSQETPSA…GRMNDQIKLR (402 aa). The region spanning 1900-1976 is the Carrier 2 domain; sequence LATTNEERTL…AILSHLTGRK (77 aa). Residue S1937 is modified to O-(pantetheine 4'-phosphoryl)serine. A condensation 2 region spans residues 2013 to 2431; that stretch reads VEDIYPCGPI…LGILPPEEQK (419 aa). Residues 2436-2512 enclose the Carrier 3 domain; the sequence is PSLSAAVVRL…AMARRSLVVS (77 aa). O-(pantetheine 4'-phosphoryl)serine is present on S2473.

It belongs to the NRP synthetase family.

It functions in the pathway secondary metabolite biosynthesis. In terms of biological role, nonribosomal peptide synthetase; part of the gene cluster that mediates the biosynthesis of terreazepine,. The first step of terreazepine biosynthesis is catalyzed by the indoleamine 2,3-dioxygenase tpzB which produces N-formyl-kynurenine through the catabolism of tryptophan. The two-module NRPS tpzA then utilizes anthranilate and kynurenine to assemble terreazepine. The first adenylation domain of tpzA (A1) loads anthranilate onto the T1 domain, while A2 loads kynurenine, generated through spontaneous nonenzymatic deformylation of the tzpB-supplied N-formyl-kynurenine. TpzA produces a 2:1 mixture of S-R enantiomers, which suggests that the A2 domain accepts both D- and L-kynurenine. The peptide bond formation between the tethered amino acids is catalyzed by the first condensation domain (C1) between anthranilate's carbonyl carbon and kynurenine's aliphatic primary amine. The second C domain (C2) catalyzes the final cyclization event between the aromatic amine of kynurenine and the tethered carbonyl carbon, yielding the final terreazepine product. The T3 domain may facilitate the interaction with downstream tailoring enzymes. This chain is Nonribosomal peptide synthetase tpzA, found in Aspergillus terreus (strain NIH 2624 / FGSC A1156).